Reading from the N-terminus, the 213-residue chain is ATP synthase peripheral stalk subunit OSCP, mitochondrial (213 aa).

The N-terminal 23 residues, 1–23, are a transit peptide targeting the mitochondrion; sequence MAAPAVSGLSRQVRYFSTSVVRP. Positions 5-23 match the SIFI-degron motif; it reads AVSGLSRQVRYFSTSVVRP. N6-acetyllysine occurs at positions 54, 60, 70, and 73. Position 90 is an N6-succinyllysine (Lys-90). N6-acetyllysine; alternate occurs at positions 158 and 162. 2 positions are modified to N6-succinyllysine; alternate: Lys-158 and Lys-162. Lys-172, Lys-176, and Lys-192 each carry N6-acetyllysine. Lys-199 is subject to N6-succinyllysine.

This sequence belongs to the ATPase delta chain family. Component of the ATP synthase complex composed at least of ATP5F1A/subunit alpha, ATP5F1B/subunit beta, ATP5MC1/subunit c (homooctomer), MT-ATP6/subunit a, MT-ATP8/subunit 8, ATP5ME/subunit e, ATP5MF/subunit f, ATP5MG/subunit g, ATP5MK/subunit k, ATP5MJ/subunit j, ATP5F1C/subunit gamma, ATP5F1D/subunit delta, ATP5F1E/subunit epsilon, ATP5PF/subunit F6, ATP5PB/subunit b, ATP5PD/subunit d, ATP5PO/subunit OSCP. ATP synthase complex consists of a soluble F(1) head domain (subunits alpha(3) and beta(3)) - the catalytic core - and a membrane F(0) domain - the membrane proton channel (subunits c, a, 8, e, f, g, k and j). These two domains are linked by a central stalk (subunits gamma, delta, and epsilon) rotating inside the F1 region and a stationary peripheral stalk (subunits F6, b, d, and OSCP). Acetylation at Lys-162 decreases ATP production. Deacetylated by SIRT3. Post-translationally, in response to mitochondrial stress, the precursor protein is ubiquitinated by the SIFI complex in the cytoplasm before mitochondrial import, leading to its degradation. Within the SIFI complex, UBR4 initiates ubiquitin chain that are further elongated or branched by KCMF1.

The protein localises to the mitochondrion. It localises to the mitochondrion inner membrane. Functionally, subunit OSCP, of the mitochondrial membrane ATP synthase complex (F(1)F(0) ATP synthase or Complex V) that produces ATP from ADP in the presence of a proton gradient across the membrane which is generated by electron transport complexes of the respiratory chain. ATP synthase complex consist of a soluble F(1) head domain - the catalytic core - and a membrane F(1) domain - the membrane proton channel. These two domains are linked by a central stalk rotating inside the F(1) region and a stationary peripheral stalk. During catalysis, ATP synthesis in the catalytic domain of F(1) is coupled via a rotary mechanism of the central stalk subunits to proton translocation. In vivo, can only synthesize ATP although its ATP hydrolase activity can be activated artificially in vitro. Part of the complex F(0) domain. Part of the complex F(0) domain and the peripheric stalk, which acts as a stator to hold the catalytic alpha(3)beta(3) subcomplex and subunit a/ATP6 static relative to the rotary elements. This is ATP synthase peripheral stalk subunit OSCP, mitochondrial from Plecturocebus moloch (Dusky titi monkey).